The following is a 378-amino-acid chain: Ribosomal RNA large subunit methyltransferase G (378 aa).

This sequence belongs to the methyltransferase superfamily. RlmG family.

It is found in the cytoplasm. It catalyses the reaction guanosine(1835) in 23S rRNA + S-adenosyl-L-methionine = N(2)-methylguanosine(1835) in 23S rRNA + S-adenosyl-L-homocysteine + H(+). Specifically methylates the guanine in position 1835 (m2G1835) of 23S rRNA. This Shigella flexneri serotype 5b (strain 8401) protein is Ribosomal RNA large subunit methyltransferase G.